Here is a 527-residue protein sequence, read N- to C-terminus: AAA ATPase forming ring-shaped complexes (527 aa).

Positions 1–18 are enriched in low complexity; that stretch reads MVTMSSPTDSSPSNSFSD. Positions 1 to 38 are disordered; the sequence is MVTMSSPTDSSPSNSFSDFNREEQSRLSDEVRQLKRTN. A compositionally biased stretch (basic and acidic residues) spans 19 to 33; the sequence is FNREEQSRLSDEVRQ. Positions 21 to 53 form a coiled coil; that stretch reads REEQSRLSDEVRQLKRTNSDLGARNAKLAEMLK. 257–262 lines the ATP pocket; it reads GCGKTL. Residues 492-515 form a disordered region; it reads DENQQSEDLPNTSNPDEWSRITGR. Positions 497-507 are enriched in polar residues; that stretch reads SEDLPNTSNPD.

It belongs to the AAA ATPase family. Homohexamer. Assembles into a hexameric ring structure.

This Corynebacterium glutamicum (strain R) protein is AAA ATPase forming ring-shaped complexes.